Consider the following 1010-residue polypeptide: Outer kinetochore KNL1 complex subunit knl-1 (1010 aa).

9 repeat units span residues 85–88 (MDIS), 109–112 (MDMS), 228–231 (MDTS), 255–258 (MDIT), 278–281 (MDIS), 323–326 (MDIT), 346–349 (MDIS), 402–405 (MDIT), and 428–431 (MDIS). The interval 85–431 (MDISESPACT…LQKEDLMDIS (347 aa)) is 9 X 4 AA repeats of M-[D/E]-[I/L/M]-[S/T]. 2 coiled-coil regions span residues 820–915 (RIVE…GLDK) and 956–988 (KALRNVRSNMIALRSEKNALEMKVAEEHEKFAQ).

As to quaternary structure, component of the KNL1 complex composed of knl-1 and kbp-5. Part of the ten-subunit outer kinetochore KMN network that includes the KNL1, MIS12 and NDC80 complexes. Interacts with the protein phosphatase 1 (PP1) catalytic subunit gsp-1; the interaction is direct. Interacts with the protein phosphatase 1 (PP1) catalytic subunit gsp-2; the interaction is direct. Interacts with the MIS12 complex subunits kbp-1, kbp-2 and mis-12. Interacts with the NDC80 complex components ndc-80 and him-10. Interacts with knl-3. Interacts with kbp-3. Interacts with kbp-4. Interacts with kbp-5.

It localises to the cytoplasm. Its subcellular location is the cell cortex. The protein localises to the chromosome. The protein resides in the centromere. It is found in the kinetochore. Its function is as follows. Acts as a component of the outer kinetochore KNL1 complex that serves as a docking point for spindle assembly checkpoint components and mediates microtubule-kinetochore interactions. Kinetochores, consisting of a centromere-associated inner segment and a microtubule-contacting outer segment, play a crucial role in chromosome segregation by mediating the physical connection between centromeric DNA and spindle microtubules. The outer kinetochore is made up of the ten-subunit KMN network, comprising the MIS12, NDC80 and KNL1 complexes, and auxiliary microtubule-associated components; together they connect the outer kinetochore with the inner kinetochore, bind microtubules, and mediate interactions with mitotic checkpoint proteins that delay anaphase until chromosomes are bioriented on the spindle. Binds the protein phosphatase 1 catalytic subunits gsp-1 and gsp-2, which has a role in delaying formation of load-bearing kinetochore-microtubule attachments. Required for the recruitment of spindle-assembly checkpoint components bub-1 and mdf-1/2 to unattached kinetochores. Binds microtubules which plays a role in silencing of the spindle assembly checkpoint, but not the formation of load-bearing microtubule-kinetochore attachments. Has a role in the correct localization of the spindly-like protein spdl-1 and the RZZ complex that is composed of rod-1, czw-1 and zwl-1 to kinetochores. The sequence is that of Outer kinetochore KNL1 complex subunit knl-1 (knl-1) from Caenorhabditis elegans.